A 362-amino-acid chain; its full sequence is S-adenosylmethionine decarboxylase proenzyme (362 aa).

Active-site residues include Glu13 and Glu16. Catalysis depends on Ser73, which acts as the Schiff-base intermediate with substrate; via pyruvic acid. Ser73 is subject to Pyruvic acid (Ser); by autocatalysis. The active-site Proton donor; for catalytic activity is Cys87. Residues Ser236 and His249 each act as proton acceptor; for processing activity in the active site.

Belongs to the eukaryotic AdoMetDC family. It depends on pyruvate as a cofactor. Post-translationally, is synthesized initially as an inactive proenzyme. Formation of the active enzyme involves a self-maturation process in which the active site pyruvoyl group is generated from an internal serine residue via an autocatalytic post-translational modification. Two non-identical subunits are generated from the proenzyme in this reaction, and the pyruvate is formed at the N-terminus of the alpha chain, which is derived from the carboxyl end of the proenzyme. The post-translation cleavage follows an unusual pathway, termed non-hydrolytic serinolysis, in which the side chain hydroxyl group of the serine supplies its oxygen atom to form the C-terminus of the beta chain, while the remainder of the serine residue undergoes an oxidative deamination to produce ammonia and the pyruvoyl group blocking the N-terminus of the alpha chain.

It carries out the reaction S-adenosyl-L-methionine + H(+) = S-adenosyl 3-(methylsulfanyl)propylamine + CO2. Its pathway is amine and polyamine biosynthesis; S-adenosylmethioninamine biosynthesis; S-adenosylmethioninamine from S-adenosyl-L-methionine: step 1/1. The chain is S-adenosylmethionine decarboxylase proenzyme (SAMDC) from Datura stramonium (Jimsonweed).